We begin with the raw amino-acid sequence, 327 residues long: Beta-ketoacyl-[acyl-carrier-protein] synthase III (327 aa).

Residues Cys-112 and His-253 contribute to the active site. Positions 254-258 (QANER) are ACP-binding. Residue Asn-283 is part of the active site.

It belongs to the thiolase-like superfamily. FabH family. In terms of assembly, homodimer.

It localises to the cytoplasm. The catalysed reaction is malonyl-[ACP] + acetyl-CoA + H(+) = 3-oxobutanoyl-[ACP] + CO2 + CoA. The protein operates within lipid metabolism; fatty acid biosynthesis. Catalyzes the condensation reaction of fatty acid synthesis by the addition to an acyl acceptor of two carbons from malonyl-ACP. Catalyzes the first condensation reaction which initiates fatty acid synthesis and may therefore play a role in governing the total rate of fatty acid production. Possesses both acetoacetyl-ACP synthase and acetyl transacylase activities. Its substrate specificity determines the biosynthesis of branched-chain and/or straight-chain of fatty acids. The polypeptide is Beta-ketoacyl-[acyl-carrier-protein] synthase III (Chlamydia muridarum (strain MoPn / Nigg)).